The sequence spans 90 residues: Small ribosomal subunit protein uS15c (90 aa).

Belongs to the universal ribosomal protein uS15 family. Part of the 30S ribosomal subunit.

Its subcellular location is the plastid. The protein resides in the chloroplast. The protein is Small ribosomal subunit protein uS15c (rps15) of Morus indica (Mulberry).